The following is a 119-amino-acid chain: Large ribosomal subunit protein uL18 (119 aa).

The protein belongs to the universal ribosomal protein uL18 family. In terms of assembly, part of the 50S ribosomal subunit; part of the 5S rRNA/L5/L18/L25 subcomplex. Contacts the 5S and 23S rRNAs.

This is one of the proteins that bind and probably mediate the attachment of the 5S RNA into the large ribosomal subunit, where it forms part of the central protuberance. The polypeptide is Large ribosomal subunit protein uL18 (Chlorobium luteolum (strain DSM 273 / BCRC 81028 / 2530) (Pelodictyon luteolum)).